The chain runs to 390 residues: Phosphopentomutase (390 aa).

Mn(2+) contacts are provided by Asp11, Asp283, His288, Asp324, His325, and His336.

It belongs to the phosphopentomutase family. Mn(2+) is required as a cofactor.

The protein localises to the cytoplasm. It catalyses the reaction 2-deoxy-alpha-D-ribose 1-phosphate = 2-deoxy-D-ribose 5-phosphate. The catalysed reaction is alpha-D-ribose 1-phosphate = D-ribose 5-phosphate. It participates in carbohydrate degradation; 2-deoxy-D-ribose 1-phosphate degradation; D-glyceraldehyde 3-phosphate and acetaldehyde from 2-deoxy-alpha-D-ribose 1-phosphate: step 1/2. Isomerase that catalyzes the conversion of deoxy-ribose 1-phosphate (dRib-1-P) and ribose 1-phosphate (Rib-1-P) to deoxy-ribose 5-phosphate (dRib-5-P) and ribose 5-phosphate (Rib-5-P), respectively. This chain is Phosphopentomutase, found in Alkaliphilus oremlandii (strain OhILAs) (Clostridium oremlandii (strain OhILAs)).